Consider the following 399-residue polypeptide: Acetate kinase (399 aa).

Residue N8 coordinates Mg(2+). An ATP-binding site is contributed by K15. R89 contacts substrate. D147 acts as the Proton donor/acceptor in catalysis. Residues 207 to 211 (HMGNG), 284 to 286 (DMR), and 332 to 336 (GIGEN) each bind ATP. E385 is a Mg(2+) binding site.

Belongs to the acetokinase family. In terms of assembly, homodimer. It depends on Mg(2+) as a cofactor. The cofactor is Mn(2+).

Its subcellular location is the cytoplasm. It catalyses the reaction acetate + ATP = acetyl phosphate + ADP. The protein operates within metabolic intermediate biosynthesis; acetyl-CoA biosynthesis; acetyl-CoA from acetate: step 1/2. Its function is as follows. Catalyzes the formation of acetyl phosphate from acetate and ATP. Can also catalyze the reverse reaction. In Streptococcus mutans serotype c (strain ATCC 700610 / UA159), this protein is Acetate kinase.